We begin with the raw amino-acid sequence, 702 residues long: Ribosomal RNA large subunit methyltransferase K/L (702 aa).

A THUMP domain is found at 43–154; the sequence is LIYQSLMWSR…KETASIALDL (112 aa).

Belongs to the methyltransferase superfamily. RlmKL family.

The protein resides in the cytoplasm. It catalyses the reaction guanosine(2445) in 23S rRNA + S-adenosyl-L-methionine = N(2)-methylguanosine(2445) in 23S rRNA + S-adenosyl-L-homocysteine + H(+). The enzyme catalyses guanosine(2069) in 23S rRNA + S-adenosyl-L-methionine = N(2)-methylguanosine(2069) in 23S rRNA + S-adenosyl-L-homocysteine + H(+). Specifically methylates the guanine in position 2445 (m2G2445) and the guanine in position 2069 (m7G2069) of 23S rRNA. The chain is Ribosomal RNA large subunit methyltransferase K/L from Salmonella agona (strain SL483).